The following is a 150-amino-acid chain: Arginine repressor (150 aa).

This sequence belongs to the ArgR family.

The protein resides in the cytoplasm. The protein operates within amino-acid biosynthesis; L-arginine biosynthesis [regulation]. In terms of biological role, regulates arginine biosynthesis genes. The sequence is that of Arginine repressor from Clostridium botulinum (strain Loch Maree / Type A3).